Reading from the N-terminus, the 137-residue chain is Large ribosomal subunit protein uL16 (137 aa).

The protein belongs to the universal ribosomal protein uL16 family. In terms of assembly, part of the 50S ribosomal subunit.

Its function is as follows. Binds 23S rRNA and is also seen to make contacts with the A and possibly P site tRNAs. The protein is Large ribosomal subunit protein uL16 of Streptococcus agalactiae serotype Ia (strain ATCC 27591 / A909 / CDC SS700).